We begin with the raw amino-acid sequence, 1013 residues long: Sodium/potassium-transporting ATPase subunit alpha-3 (1013 aa).

A disordered region spans residues 1–24; that stretch reads MGDKKDDKDSPKKNKGKERRDLDD. At 1-77 the chain is on the cytoplasmic side; it reads MGDKKDDKDS…NALTPPPTTP (77 aa). Phosphoserine occurs at positions 37 and 56. Residues 72-74 are interaction with phosphoinositide-3 kinase; the sequence is PPP. Residues 78-98 form a helical membrane-spanning segment; sequence EWVKFCRQLFGGFSILLWIGA. Over 99–121 the chain is Extracellular; the sequence is ILCFLAYGIQAGTEDDPSGDNLY. The chain crosses the membrane as a helical span at residues 122–142; that stretch reads LGIVLAAVVIITGCFSYYQEA. At 143–278 the chain is on the cytoplasmic side; that stretch reads KSSKIMESFK…VGKTPIAIEI (136 aa). A phosphoserine mark is found at Ser218 and Ser265. The helical transmembrane segment at 279-298 threads the bilayer; it reads EHFIQLITGVAVFLGVSFFI. Over 299 to 310 the chain is Extracellular; that stretch reads LSLILGYTWLEA. A helical membrane pass occupies residues 311 to 328; sequence VIFLIGIIVANVPEGLLA. The Cytoplasmic segment spans residues 329–762; that stretch reads TVTVCLTLTA…EEGRLIFDNL (434 aa). Catalysis depends on Asp366, which acts as the 4-aspartylphosphate intermediate. Ser442 carries the phosphoserine modification. Tyr548 bears the Phosphotyrosine mark. Residues Asp707 and Asp711 each contribute to the Mg(2+) site. A helical transmembrane segment spans residues 763-782; sequence KKSIAYTLTSNIPEITPFLL. Over 783 to 792 the chain is Extracellular; that stretch reads FIMANIPLPL. The chain crosses the membrane as a helical span at residues 793 to 813; the sequence is GTITILCIDLGTDMVPAISLA. Residues 814–833 lie on the Cytoplasmic side of the membrane; sequence YEAAESDIMKRQPRNPRTDK. A helical transmembrane segment spans residues 834 to 856; that stretch reads LVNERLISMAYGQIGMIQALGGF. Topologically, residues 857 to 908 are extracellular; the sequence is FSYFVILAENGFLPGNLVGIRLNWDDRTVNDLEDSYGQQWTYEQRKVVEFTC. A helical transmembrane segment spans residues 909–928; sequence HTAFFVSIVVVQWADLIICK. Over 929–941 the chain is Cytoplasmic; it reads TRRNSVFQQGMKN. A Phosphoserine; by PKA modification is found at Ser933. Residues 942-960 form a helical membrane-spanning segment; that stretch reads KILIFGLFEETALAAFLSY. At 961-975 the chain is on the extracellular side; sequence CPGMDVALRMYPLKP. Residues 976-996 traverse the membrane as a helical segment; it reads SWWFCAFPYSFLIFVYDEIRK. The Cytoplasmic portion of the chain corresponds to 997–1013; sequence LILRRNPGGWVEKETYY.

Belongs to the cation transport ATPase (P-type) (TC 3.A.3) family. Type IIC subfamily. The sodium/potassium-transporting ATPase is composed of a catalytic alpha subunit, an auxiliary non-catalytic beta subunit and an additional regulatory subunit. Interacts with regulatory subunit FXYD1.

The protein localises to the cell membrane. It carries out the reaction K(+)(out) + Na(+)(in) + ATP + H2O = K(+)(in) + Na(+)(out) + ADP + phosphate + H(+). Functionally, this is the catalytic component of the active enzyme, which catalyzes the hydrolysis of ATP coupled with the exchange of sodium and potassium ions across the plasma membrane. This action creates the electrochemical gradient of sodium and potassium ions, providing the energy for active transport of various nutrients. The sequence is that of Sodium/potassium-transporting ATPase subunit alpha-3 (ATP1A3) from Homo sapiens (Human).